Consider the following 557-residue polypeptide: Proline--tRNA ligase (557 aa).

This sequence belongs to the class-II aminoacyl-tRNA synthetase family. ProS type 1 subfamily. In terms of assembly, homodimer.

Its subcellular location is the cytoplasm. It catalyses the reaction tRNA(Pro) + L-proline + ATP = L-prolyl-tRNA(Pro) + AMP + diphosphate. Its function is as follows. Catalyzes the attachment of proline to tRNA(Pro) in a two-step reaction: proline is first activated by ATP to form Pro-AMP and then transferred to the acceptor end of tRNA(Pro). As ProRS can inadvertently accommodate and process non-cognate amino acids such as alanine and cysteine, to avoid such errors it has two additional distinct editing activities against alanine. One activity is designated as 'pretransfer' editing and involves the tRNA(Pro)-independent hydrolysis of activated Ala-AMP. The other activity is designated 'posttransfer' editing and involves deacylation of mischarged Ala-tRNA(Pro). The misacylated Cys-tRNA(Pro) is not edited by ProRS. This is Proline--tRNA ligase from Baumannia cicadellinicola subsp. Homalodisca coagulata.